The chain runs to 205 residues: MEYKALIVGLGNPGSEYAKTRHNIGFMAVDALAEVAKSRKSMRFKEMGISGDFELFSLNLAGNNVLATKPLTYMNLSGKAVAAICGKYSIAVSDVYVIHDELDLPCGRMKFKKGGGNNGHRGLESIQEKMGSPNFFRIRVGIGRPEFSSQVKDYVLEEFNTQELAIAAQMSQAAIKGLNLHFRRGQGTATQFMNSFMPDLPETEP.

Tyr-17 provides a ligand contact to tRNA. His-22 acts as the Proton acceptor in catalysis. 2 residues coordinate tRNA: Tyr-73 and Asn-75.

Belongs to the PTH family. In terms of assembly, monomer.

It localises to the cytoplasm. It catalyses the reaction an N-acyl-L-alpha-aminoacyl-tRNA + H2O = an N-acyl-L-amino acid + a tRNA + H(+). Hydrolyzes ribosome-free peptidyl-tRNAs (with 1 or more amino acids incorporated), which drop off the ribosome during protein synthesis, or as a result of ribosome stalling. Functionally, catalyzes the release of premature peptidyl moieties from peptidyl-tRNA molecules trapped in stalled 50S ribosomal subunits, and thus maintains levels of free tRNAs and 50S ribosomes. This is Peptidyl-tRNA hydrolase from Maridesulfovibrio salexigens (strain ATCC 14822 / DSM 2638 / NCIMB 8403 / VKM B-1763) (Desulfovibrio salexigens).